Consider the following 372-residue polypeptide: MEINVQAIVIDNGSDTCKAGFVGEEAPHSEFPSIVGIDQNDSYVGNEAQSKRGILTLKYPIERGIITNWDDMEKIWHHAFYNELGVAPEENIVVLSESPLNPEENREKMAQIMFETFKTPAIYVENQAVFSIYNSGRMTGIVLDSGDSASHVVPVYEGLALPHATSSLGFAGCDLTDQMSLLLNDLGYNLEREIVRDIKEKLSYVSSDFSWEINDPSTLGKSYELPDGQVITIDKELFACPEVLFLPYAFFGTNLDGIDKAIYNSIMKCNDDIHNDLYGNVVLSGGSTMFPGIEYRMYKGLTQLAPSTTEIVINAEPDRKNSVWIGGSILGLVPNFQELCIDKEDYDEYGPSFVNLVKSFREQNHQNYYGEN.

It belongs to the actin family.

The protein localises to the cytoplasm. It is found in the cytoskeleton. It catalyses the reaction ATP + H2O = ADP + phosphate + H(+). Functionally, actins are highly conserved proteins that are involved in various types of cell motility and are ubiquitously expressed in all eukaryotic cells. Multiple isoforms are involved in various cellular functions such as cytoskeleton structure, cell mobility, chromosome movement and muscle contraction. The polypeptide is Putative actin-27 (act27) (Dictyostelium discoideum (Social amoeba)).